The sequence spans 178 residues: Protein GrpE (178 aa).

It belongs to the GrpE family. As to quaternary structure, homodimer.

The protein resides in the cytoplasm. In terms of biological role, participates actively in the response to hyperosmotic and heat shock by preventing the aggregation of stress-denatured proteins, in association with DnaK and GrpE. It is the nucleotide exchange factor for DnaK and may function as a thermosensor. Unfolded proteins bind initially to DnaJ; upon interaction with the DnaJ-bound protein, DnaK hydrolyzes its bound ATP, resulting in the formation of a stable complex. GrpE releases ADP from DnaK; ATP binding to DnaK triggers the release of the substrate protein, thus completing the reaction cycle. Several rounds of ATP-dependent interactions between DnaJ, DnaK and GrpE are required for fully efficient folding. The protein is Protein GrpE of Bordetella avium (strain 197N).